The chain runs to 421 residues: Gamma-glutamyl phosphate reductase (421 aa).

The protein belongs to the gamma-glutamyl phosphate reductase family.

The protein resides in the cytoplasm. It carries out the reaction L-glutamate 5-semialdehyde + phosphate + NADP(+) = L-glutamyl 5-phosphate + NADPH + H(+). The protein operates within amino-acid biosynthesis; L-proline biosynthesis; L-glutamate 5-semialdehyde from L-glutamate: step 2/2. Catalyzes the NADPH-dependent reduction of L-glutamate 5-phosphate into L-glutamate 5-semialdehyde and phosphate. The product spontaneously undergoes cyclization to form 1-pyrroline-5-carboxylate. The sequence is that of Gamma-glutamyl phosphate reductase from Nocardia farcinica (strain IFM 10152).